The primary structure comprises 591 residues: L-fucose isomerase (591 aa).

Catalysis depends on proton acceptor residues Glu337 and Asp361. The Mn(2+) site is built by Glu337, Asp361, and His528.

Belongs to the L-fucose isomerase family. Homohexamer. Mn(2+) serves as cofactor.

The protein localises to the cytoplasm. The catalysed reaction is L-fucose = L-fuculose. Its pathway is carbohydrate degradation; L-fucose degradation; L-lactaldehyde and glycerone phosphate from L-fucose: step 1/3. Functionally, converts the aldose L-fucose into the corresponding ketose L-fuculose. This is L-fucose isomerase from Escherichia coli (strain ATCC 8739 / DSM 1576 / NBRC 3972 / NCIMB 8545 / WDCM 00012 / Crooks).